A 558-amino-acid polypeptide reads, in one-letter code: MLLDKLSVLSFLGLAPIFAAAQLSGSVGPLTSASTKAATKTCNVLDYGAKADKSTDLGAPLASAFADCKSGGLVYVPSGDYALSTWARLSGGEAWALQIDGIIYRTGTDGGNMIYIEHSSDFELFSSTSEGAMQGLGYEFHADDNWSGPRLLRLYEVTDFSVHDFILVDSPSFHFSLDTCTNGEIYNMAIRGGNHGGLDGIDVWSNNIWVHDVEVTNKDECVTVKSPSKNILIESIYCNWSGGCGMGSFGSDTNVSDITYRNIYTWSSNNMMLIKSNGGSGFVENVLLENFIGHGNAYSLDIDSYWASMSAVDGDGVQLSNITVKNWKGTEAYGAERGPVKVVCADGAPCYDITIEDFAMWTEEGDSQWYSCESAYGSGYCLQDSDDHVSYSVTTSTVSSAPSGYSATSMAADLTTDFGSTVSIPIPTIPTSFYPGATPYSALMANSASTAAASSIASHATVHSSSASVAASVPSAVAPSESIPAATSAVVSSAAAIAPSPAVGAQEGSTTSAPSFAAPSGAGNSPQGPTGASGFGEKGQQGEQGEQGEQGEQGVCYV.

The N-terminal stretch at 1–21 is a signal peptide; sequence MLLDKLSVLSFLGLAPIFAAA. Cys-42 and Cys-68 are disulfide-bonded. Residue Asn-145 is glycosylated (N-linked (GlcNAc...) asparagine). The Proton donor role is filled by Asp-219. A disulfide bond links Cys-221 and Cys-238. Asn-239 and Asn-254 each carry an N-linked (GlcNAc...) asparagine glycan. The active site involves His-294. N-linked (GlcNAc...) asparagine glycosylation is present at Asn-321. 2 disulfides stabilise this stretch: Cys-344–Cys-350 and Cys-372–Cys-381. Over residues 503-526 the composition is skewed to low complexity; the sequence is VGAQEGSTTSAPSFAAPSGAGNSP. Residues 503–558 are disordered; sequence VGAQEGSTTSAPSFAAPSGAGNSPQGPTGASGFGEKGQQGEQGEQGEQGEQGVCYV.

Belongs to the glycosyl hydrolase 28 family.

It is found in the secreted. The catalysed reaction is Endohydrolysis of alpha-D-GalA-(1-&gt;2)-alpha-L-Rha glycosidic bond in the rhamnogalacturonan I backbone with initial inversion of anomeric configuration releasing oligosaccharides with beta-D-GalA at the reducing end.. Pectinolytic enzymes consist of four classes of enzymes: pectine lyase, polygalacturonase, pectin methylesterase and rhamnogalacturonase. Hydrolyzes alpha-D-galacturonopyranosyl-(1,2)-alpha-L-rhamnopyranosyl linkages in the backbone of the hairy regions of pectins. The protein is Probable rhamnogalacturonase B (rhgB) of Aspergillus niger (strain ATCC MYA-4892 / CBS 513.88 / FGSC A1513).